Reading from the N-terminus, the 222-residue chain is Thymidylate kinase (222 aa).

10–17 (GLEGAGKS) provides a ligand contact to ATP.

Belongs to the thymidylate kinase family.

The enzyme catalyses dTMP + ATP = dTDP + ADP. In terms of biological role, phosphorylation of dTMP to form dTDP in both de novo and salvage pathways of dTTP synthesis. This is Thymidylate kinase from Alteromonas mediterranea (strain DSM 17117 / CIP 110805 / LMG 28347 / Deep ecotype).